The primary structure comprises 245 residues: 5-oxoprolinase subunit A (245 aa).

Belongs to the LamB/PxpA family. Forms a complex composed of PxpA, PxpB and PxpC.

The enzyme catalyses 5-oxo-L-proline + ATP + 2 H2O = L-glutamate + ADP + phosphate + H(+). Its function is as follows. Catalyzes the cleavage of 5-oxoproline to form L-glutamate coupled to the hydrolysis of ATP to ADP and inorganic phosphate. The polypeptide is 5-oxoprolinase subunit A (Haemophilus influenzae (strain 86-028NP)).